The sequence spans 855 residues: DNA mismatch repair protein MutS (855 aa).

616-623 (GPNMGGKS) contributes to the ATP binding site.

It belongs to the DNA mismatch repair MutS family.

This protein is involved in the repair of mismatches in DNA. It is possible that it carries out the mismatch recognition step. This protein has a weak ATPase activity. This is DNA mismatch repair protein MutS from Salmonella newport (strain SL254).